The chain runs to 444 residues: Tubulin beta-2 chain (444 aa).

Residues Gln-11, Glu-69, Ser-138, Gly-142, Thr-143, Gly-144, Asn-204, and Asn-226 each contribute to the GTP site. Residue Glu-69 coordinates Mg(2+).

This sequence belongs to the tubulin family. Dimer of alpha and beta chains. A typical microtubule is a hollow water-filled tube with an outer diameter of 25 nm and an inner diameter of 15 nM. Alpha-beta heterodimers associate head-to-tail to form protofilaments running lengthwise along the microtubule wall with the beta-tubulin subunit facing the microtubule plus end conferring a structural polarity. Microtubules usually have 13 protofilaments but different protofilament numbers can be found in some organisms and specialized cells. Requires Mg(2+) as cofactor.

The protein resides in the cytoplasm. It localises to the cytoskeleton. In terms of biological role, tubulin is the major constituent of microtubules, a cylinder consisting of laterally associated linear protofilaments composed of alpha- and beta-tubulin heterodimers. Microtubules grow by the addition of GTP-tubulin dimers to the microtubule end, where a stabilizing cap forms. Below the cap, tubulin dimers are in GDP-bound state, owing to GTPase activity of alpha-tubulin. The sequence is that of Tubulin beta-2 chain (TUBB2) from Zea mays (Maize).